A 455-amino-acid chain; its full sequence is Proline--tRNA ligase (455 aa).

3 residues coordinate L-proline: Thr101, Glu103, and Arg132. 4 residues coordinate ATP: Arg132, Glu134, Gln216, and Thr219. His221 is a binding site for L-proline. ATP is bound by residues Ser253 and Arg255. The segment at 329-359 is interaction with tRNA; sequence EIKGVPLRIEVGPKDIENKKITLFRRDTMEK.

This sequence belongs to the class-II aminoacyl-tRNA synthetase family. ProS type 3 subfamily. Homodimer. The dimer is functionally asymmetric: only one of the two active sites at a time is able to form prolyl-adenylate, and only one tRNA molecule binds per dimer.

The protein localises to the cytoplasm. The catalysed reaction is tRNA(Pro) + L-proline + ATP = L-prolyl-tRNA(Pro) + AMP + diphosphate. Its activity is regulated as follows. Inhibited by high concentrations of prolinamide. Catalyzes the attachment of proline to tRNA(Pro) in a two-step reaction: proline is first activated by ATP to form Pro-AMP and then transferred to the acceptor end of tRNA(Pro). Can inadvertently accommodate and process non-cognate amino acids such as cysteine and alanine. The protein is Proline--tRNA ligase (proS) of Methanocaldococcus jannaschii (strain ATCC 43067 / DSM 2661 / JAL-1 / JCM 10045 / NBRC 100440) (Methanococcus jannaschii).